Here is a 232-residue protein sequence, read N- to C-terminus: MKKAVVVFSGGQDSTTCLVQALKEFDEVHAITFDYGQRHKLEIEVAQKIAKDLGVKAHKVMDVGLLNELAISSLTRDDIPVSHELQENGLPNSFVPGRNILFLTLAGIYAYQIGADTVITGVCETDFSGYPDCRDDFVKSMNTALVKGMDRALTIKTPLMWLNKAETWALADQYNALQLVRENTLTCYNGIIGDGCGDCPSCDLRKAGLDEYLNNKDAVMKSLVQKQESEGL.

ATP is bound at residue 8–18 (FSGGQDSTTCL). Zn(2+) is bound by residues C187, C196, C199, and C202.

The protein belongs to the QueC family. The cofactor is Zn(2+).

It catalyses the reaction 7-carboxy-7-deazaguanine + NH4(+) + ATP = 7-cyano-7-deazaguanine + ADP + phosphate + H2O + H(+). It functions in the pathway purine metabolism; 7-cyano-7-deazaguanine biosynthesis. In terms of biological role, catalyzes the ATP-dependent conversion of 7-carboxy-7-deazaguanine (CDG) to 7-cyano-7-deazaguanine (preQ(0)). This chain is 7-cyano-7-deazaguanine synthase, found in Vibrio parahaemolyticus serotype O3:K6 (strain RIMD 2210633).